A 376-amino-acid polypeptide reads, in one-letter code: Queuine tRNA-ribosyltransferase (376 aa).

The active-site Proton acceptor is Asp-89. Substrate is bound by residues 89-93 (DSGGF), Asp-143, Gln-187, and Gly-214. The RNA binding stretch occupies residues 245–251 (GVGKPQD). Catalysis depends on Asp-264, which acts as the Nucleophile. The tract at residues 269–273 (TRNAR) is RNA binding; important for wobble base 34 recognition. Residues Cys-302, Cys-304, Cys-307, and His-333 each coordinate Zn(2+).

It belongs to the queuine tRNA-ribosyltransferase family. Homodimer. Within each dimer, one monomer is responsible for RNA recognition and catalysis, while the other monomer binds to the replacement base PreQ1. The cofactor is Zn(2+).

The enzyme catalyses 7-aminomethyl-7-carbaguanine + guanosine(34) in tRNA = 7-aminomethyl-7-carbaguanosine(34) in tRNA + guanine. It functions in the pathway tRNA modification; tRNA-queuosine biosynthesis. Its function is as follows. Catalyzes the base-exchange of a guanine (G) residue with the queuine precursor 7-aminomethyl-7-deazaguanine (PreQ1) at position 34 (anticodon wobble position) in tRNAs with GU(N) anticodons (tRNA-Asp, -Asn, -His and -Tyr). Catalysis occurs through a double-displacement mechanism. The nucleophile active site attacks the C1' of nucleotide 34 to detach the guanine base from the RNA, forming a covalent enzyme-RNA intermediate. The proton acceptor active site deprotonates the incoming PreQ1, allowing a nucleophilic attack on the C1' of the ribose to form the product. After dissociation, two additional enzymatic reactions on the tRNA convert PreQ1 to queuine (Q), resulting in the hypermodified nucleoside queuosine (7-(((4,5-cis-dihydroxy-2-cyclopenten-1-yl)amino)methyl)-7-deazaguanosine). This chain is Queuine tRNA-ribosyltransferase, found in Erwinia tasmaniensis (strain DSM 17950 / CFBP 7177 / CIP 109463 / NCPPB 4357 / Et1/99).